Consider the following 295-residue polypeptide: 2-methylisocitrate lyase (295 aa).

45 to 47 (SGG) is a binding site for substrate. 2 residues coordinate Mg(2+): aspartate 85 and aspartate 87. Substrate-binding positions include 123 to 124 (CG), arginine 158, glutamate 188, 210 to 212 (NIT), arginine 241, and arginine 270.

Belongs to the isocitrate lyase/PEP mutase superfamily. Methylisocitrate lyase family. In terms of assembly, homotetramer; dimer of dimers. It depends on Mg(2+) as a cofactor.

It carries out the reaction (2S,3R)-3-hydroxybutane-1,2,3-tricarboxylate = pyruvate + succinate. The protein operates within organic acid metabolism; propanoate degradation. Functionally, involved in the catabolism of short chain fatty acids (SCFA) via the 2-methylcitrate cycle I (propionate degradation route). Catalyzes the thermodynamically favored C-C bond cleavage of (2R,3S)-2-methylisocitrate to yield pyruvate and succinate via an alpha-carboxy-carbanion intermediate. The polypeptide is 2-methylisocitrate lyase (Salmonella typhimurium (strain LT2 / SGSC1412 / ATCC 700720)).